Reading from the N-terminus, the 332-residue chain is Phenylalanine--tRNA ligase alpha subunit (332 aa).

E252 contacts Mg(2+).

It belongs to the class-II aminoacyl-tRNA synthetase family. Phe-tRNA synthetase alpha subunit type 1 subfamily. Tetramer of two alpha and two beta subunits. Mg(2+) serves as cofactor.

The protein localises to the cytoplasm. The enzyme catalyses tRNA(Phe) + L-phenylalanine + ATP = L-phenylalanyl-tRNA(Phe) + AMP + diphosphate + H(+). This is Phenylalanine--tRNA ligase alpha subunit from Marinobacter nauticus (strain ATCC 700491 / DSM 11845 / VT8) (Marinobacter aquaeolei).